The chain runs to 354 residues: Uroporphyrinogen decarboxylase (354 aa).

Substrate-binding positions include 28 to 32 (RQAGR), Asp-78, Tyr-155, Ser-210, and His-325.

It belongs to the uroporphyrinogen decarboxylase family. Homodimer.

Its subcellular location is the cytoplasm. It carries out the reaction uroporphyrinogen III + 4 H(+) = coproporphyrinogen III + 4 CO2. It functions in the pathway porphyrin-containing compound metabolism; protoporphyrin-IX biosynthesis; coproporphyrinogen-III from 5-aminolevulinate: step 4/4. In terms of biological role, catalyzes the decarboxylation of four acetate groups of uroporphyrinogen-III to yield coproporphyrinogen-III. This Crocosphaera subtropica (strain ATCC 51142 / BH68) (Cyanothece sp. (strain ATCC 51142)) protein is Uroporphyrinogen decarboxylase.